Consider the following 223-residue polypeptide: N-terminal Xaa-Pro-Lys N-methyltransferase 1 (223 aa).

M1 is modified (N-acetylmethionine). T2 bears the N-acetylthreonine; in N-terminal Xaa-Pro-Lys N-methyltransferase 1, N-terminally processed mark. S-adenosyl-L-methionine-binding positions include G69, R74, 91 to 93 (DVT), 119 to 120 (LQ), and Q135.

Belongs to the methyltransferase superfamily. NTM1 family.

The protein localises to the nucleus. It catalyses the reaction N-terminal L-alanyl-L-prolyl-L-lysyl-[protein] + 3 S-adenosyl-L-methionine = N-terminal N,N,N-trimethyl-L-alanyl-L-prolyl-L-lysyl-[protein] + 3 S-adenosyl-L-homocysteine + 3 H(+). The catalysed reaction is N-terminal L-seryl-L-prolyl-L-lysyl-[protein] + 3 S-adenosyl-L-methionine = N-terminal N,N,N-trimethyl-L-seryl-L-prolyl-L-lysyl-[protein] + 3 S-adenosyl-L-homocysteine + 3 H(+). The enzyme catalyses N-terminal L-prolyl-L-prolyl-L-lysyl-[protein] + 2 S-adenosyl-L-methionine = N-terminal N,N-dimethyl-L-prolyl-L-prolyl-L-lysyl-[protein] + 2 S-adenosyl-L-homocysteine + 2 H(+). Its function is as follows. Distributive alpha-N-methyltransferase that methylates the N-terminus of target proteins containing the N-terminal motif [Ala/Gly/Pro/Ser]-Pro-Lys when the initiator Met is cleaved. Specifically catalyzes mono-, di- or tri-methylation of the exposed alpha-amino group of the Ala, Gly or Ser residue in the [Ala/Gly/Ser]-Pro-Lys motif and mono- or di-methylation of Pro in the Pro-Pro-Lys motif. Some of the substrates may be primed by NTMT2-mediated monomethylation. Catalyzes the trimethylation of the N-terminal Gly in CENPA (after removal of Met-1). Responsible for the N-terminal methylation of KLHL31, MYL2, MYL3, RB1, RCC1, RPL23A and SET. Required during mitosis for normal bipolar spindle formation and chromosome segregation via its action on RCC1. The chain is N-terminal Xaa-Pro-Lys N-methyltransferase 1 (NTMT1) from Bos taurus (Bovine).